We begin with the raw amino-acid sequence, 265 residues long: Aquaporin-5 (265 aa).

Residues 1–12 (MKKEVCSLAFFK) are Cytoplasmic-facing. The helical transmembrane segment at 13–33 (AVFAEFLATLIFVFFGLGSAL) threads the bilayer. The Extracellular segment spans residues 34–39 (KWPSAL). A helical transmembrane segment spans residues 40–60 (PTILQISIAFGLAIGTLAQAL). The Cytoplasmic segment spans residues 61–65 (GPVSG). An intramembrane region (discontinuously helical) is located at residues 66–74 (GHINPAITL). The short motif at 69–71 (NPA) is the NPA 1 element. Over 75–87 (ALLIGNQISLLRA) the chain is Cytoplasmic. A helical transmembrane segment spans residues 88 to 108 (VFYVAAQLVGAIAGAGILYWL). The Extracellular portion of the chain corresponds to 109–126 (APLNARGNLAVNALNNNT). Asn-124 is a glycosylation site (N-linked (GlcNAc...) asparagine). A helical membrane pass occupies residues 127-147 (TPGKAMVVELILTFQLALCIF). The Cytoplasmic portion of the chain corresponds to 148-158 (SSTDSRRTSPV). Residues 159-179 (GSPALSIGLSVTLGHLVGIYF) traverse the membrane as a helical segment. Thr-180 is a topological domain (extracellular). Positions 181 to 191 (GCSMNPARSFG) form an intramembrane region, discontinuously helical. Residues 185–187 (NPA) carry the NPA 2 motif. Residues 192-203 (PAVVMNRFSPSH) lie on the Extracellular side of the membrane. Residues 204 to 224 (WVFWVGPIVGAMLAAILYFYL) form a helical membrane-spanning segment. Over 225–265 (LFPSSLSLHDRVAVVKGTYEPEEDWEDHREERKKTIELTAH) the chain is Cytoplasmic.

This sequence belongs to the MIP/aquaporin (TC 1.A.8) family. As to quaternary structure, homotetramer; each monomer provides an independent water pore. Interacts with TRPV4; the interaction is probably indirect and regulates TRPV4 activation by hypotonicity. In terms of tissue distribution, salivary glands, lacrimal glands, corneal epithelium in eye, trachea and lung.

The protein resides in the apical cell membrane. It localises to the cell membrane. Its subcellular location is the cytoplasmic vesicle membrane. The catalysed reaction is H2O(in) = H2O(out). Aquaporins form homotetrameric transmembrane channels, with each monomer independently mediating water transport across the plasma membrane along its osmotic gradient. Plays an important role in fluid secretion in salivary glands. Required for TRPV4 activation by hypotonicity. Together with TRPV4, controls regulatory volume decrease in salivary epithelial cells. Seems to play a redundant role in water transport in the eye, lung and in sweat glands. In Rattus norvegicus (Rat), this protein is Aquaporin-5.